Consider the following 507-residue polypeptide: FLYWCH transcription factor 1 (507 aa).

The segment covering Met1–Ser26 has biased composition (low complexity). The interval Met1–Ala51 is disordered. The FLYWCH-type zinc-finger motif lies at Lys135 to His192.

Probable transcription factor. Binds to the DNA sequence motif 5'-[AG]GGCGCCG-3' in the promoters of target genes, including micro-RNA genes, in order to repress expression, and acting redundantly with flh-2. The sequence is that of FLYWCH transcription factor 1 from Caenorhabditis elegans.